Reading from the N-terminus, the 706-residue chain is Ribosomal RNA large subunit methyltransferase K/L (706 aa).

Positions 43 to 154 (LMYQSLLWSR…RDMASVALDL (112 aa)) constitute a THUMP domain.

It belongs to the methyltransferase superfamily. RlmKL family.

The protein resides in the cytoplasm. It carries out the reaction guanosine(2445) in 23S rRNA + S-adenosyl-L-methionine = N(2)-methylguanosine(2445) in 23S rRNA + S-adenosyl-L-homocysteine + H(+). It catalyses the reaction guanosine(2069) in 23S rRNA + S-adenosyl-L-methionine = N(2)-methylguanosine(2069) in 23S rRNA + S-adenosyl-L-homocysteine + H(+). Functionally, specifically methylates the guanine in position 2445 (m2G2445) and the guanine in position 2069 (m7G2069) of 23S rRNA. The chain is Ribosomal RNA large subunit methyltransferase K/L from Yersinia enterocolitica serotype O:8 / biotype 1B (strain NCTC 13174 / 8081).